Reading from the N-terminus, the 923-residue chain is Neuropilin-1 (923 aa).

The N-terminal stretch at 1–21 (MERGLPLLCATLALALALAGA) is a signal peptide. The Extracellular portion of the chain corresponds to 22-856 (FRSDKCGGTI…PGNVLKTLDP (835 aa)). 3 cysteine pairs are disulfide-bonded: cysteine 27-cysteine 54, cysteine 82-cysteine 104, and cysteine 147-cysteine 173. 2 consecutive CUB domains span residues 27 to 141 (CGGT…YEIF) and 147 to 265 (CSQN…YSVL). Asparagine 150 is a glycosylation site (N-linked (GlcNAc...) asparagine). The Ca(2+) site is built by glutamate 195, aspartate 209, and aspartate 250. Cysteine 206 and cysteine 228 are oxidised to a cystine. Residues asparagine 261, asparagine 300, and asparagine 522 are each glycosylated (N-linked (GlcNAc...) asparagine). 2 disulfides stabilise this stretch: cysteine 275/cysteine 424 and cysteine 431/cysteine 583. F5/8 type C domains are found at residues 275 to 424 (CMEA…VYGC) and 431 to 583 (CSGM…LLGC). The O-linked (Xyl...) (chondroitin sulfate) serine; alternate glycan is linked to serine 612. Serine 612 carries O-linked (Xyl...) (heparan sulfate) serine; alternate glycosylation. The 167-residue stretch at 645-811 (TYGFNCEFGW…NHISQEDCAK (167 aa)) folds into the MAM domain. The disordered stretch occupies residues 820–845 (TEIKIDETGSTPGYEGEGEGDKNISR). O-linked (Xyl...) (chondroitin sulfate) serine glycosylation is present at serine 829. Residue asparagine 842 is glycosylated (N-linked (GlcNAc...) asparagine). The helical transmembrane segment at 857–879 (ILITIIAMSALGVLLGAVCGVVL) threads the bilayer. Residues 880 to 923 (YCACWHNGMSERNLSALENYNFELVDGVKLKKDKLNPQSNYSEA) lie on the Cytoplasmic side of the membrane. Serine 894 carries the post-translational modification Phosphoserine.

The protein belongs to the neuropilin family. As to quaternary structure, homodimer, and heterodimer with NRP2. Binds PLXNB1. Interacts with FER. Interacts with VEGFA. Interacts with ABCB8/MITOSUR in mitochondria. Nervous system.

The protein localises to the mitochondrion membrane. The protein resides in the cell membrane. Its subcellular location is the cytoplasm. Functionally, receptor involved in the development of the cardiovascular system, in angiogenesis, in the formation of certain neuronal circuits and in organogenesis outside the nervous system. Mediates the chemorepulsant activity of semaphorins. Recognizes a C-end rule (CendR) motif R/KXXR/K on its ligands which causes cellular internalization and vascular leakage. Binds to semaphorin 3A (SEMA3A), the PLGF-2 isoform of PGF, the VEGF165 isoform of VEGFA and VEGFB. Coexpression with KDR results in increased VEGF165 binding to KDR as well as increased chemotaxis. Regulates VEGF-induced angiogenesis. Binding to VEGFA initiates a signaling pathway needed for motor neuron axon guidance and cell body migration, including for the caudal migration of facial motor neurons from rhombomere 4 to rhombomere 6 during embryonic development. Regulates mitochondrial iron transport via interaction with ABCB8/MITOSUR. The sequence is that of Neuropilin-1 from Mus musculus (Mouse).